The chain runs to 1730 residues: Myosin-7 (1730 aa).

Residues 8-56 (TVGSHVWVEDPDDAWIDGEVEEVNSEEITVNCSGKTVVAKLNNVYPKDP) form the Myosin N-terminal SH3-like domain. A Myosin motor domain is found at 61-731 (LGVDDMTKLA…QMAEMDAHRA (671 aa)). ATP contacts are provided by residues 155–162 (GESGAGKT) and 208–216 (NNNSSRFGK). Actin-binding stretches follow at residues 494-528 (LIEK…YQTF), 530-553 (NHKR…AGDV), 588-612 (FPPL…KQQL), and 612-634 (LQSL…KPNN). IQ domains are found at residues 757-786 (LQAA…EAAS), 782-811 (REAA…SACS), 831-850 (RRAT…HQRY), and 853-882 (TKKA…AAKE). Residues 883–1224 (TGALQDAKTK…VSDMETAEQI (342 aa)) adopt a coiled-coil conformation. Residues 1327-1678 (DRIVPVFGSA…ISNLKLLLTN (352 aa)) enclose the Dilute domain. Disordered stretches follow at residues 1367–1387 (QSST…FGRM) and 1456–1520 (DSSV…SSEE). The span at 1456 to 1465 (DSSVVNSPSK) shows a compositional bias: low complexity. Basic and acidic residues predominate over residues 1475 to 1508 (SSEENSPKKSSEENSPKESSGDKSPQKLSDDNSP).

This sequence belongs to the TRAFAC class myosin-kinesin ATPase superfamily. Myosin family. Plant myosin class XI subfamily. In terms of assembly, homodimer.

In terms of biological role, myosin heavy chain that is required for the cell cycle-regulated transport of various organelles and proteins for their segregation. Functions by binding with its tail domain to receptor proteins on organelles and exerting force with its N-terminal motor domain against actin filaments, thereby transporting its cargo along polarized actin cables. The sequence is that of Myosin-7 (XI-A) from Arabidopsis thaliana (Mouse-ear cress).